A 343-amino-acid chain; its full sequence is Cell cycle control protein 50C (343 aa).

Residues 1-34 (MKRKCQDYESRLPDNTAVKQQQLPAFRLQLTASE) lie on the Cytoplasmic side of the membrane. Residues 35–55 (ILSGFFAIGLFCLGMGIILLL) form a helical membrane-spanning segment. Residues 56-306 (SAKSIKEVEI…STLTWSGGSS (251 aa)) are Extracellular-facing. Asparagine 66, asparagine 164, asparagine 205, and asparagine 265 each carry an N-linked (GlcNAc...) asparagine glycan. The chain crosses the membrane as a helical span at residues 307–327 (LFLALAYLVTGAVTLLASFSM). Residues 328-343 (MALHLKLKERKTFFLQ) are Cytoplasmic-facing.

The protein belongs to the CDC50/LEM3 family.

It localises to the membrane. The sequence is that of Cell cycle control protein 50C (TMEM30C) from Bos taurus (Bovine).